Consider the following 211-residue polypeptide: Rho-related GTP-binding protein RhoF (211 aa).

The residue at position 1 (M1) is an N-acetylmethionine. 26 to 33 (GDGGCGKT) contacts GTP. The Effector region motif lies at 48 to 56 (YAPSVFEKY). GTP contacts are provided by residues 73–77 (DTAGQ) and 131–134 (CKTD). Cysteine methyl ester is present on C208. A lipid anchor (S-geranylgeranyl cysteine) is attached at C208. A propeptide spans 209 to 211 (LLL) (removed in mature form).

This sequence belongs to the small GTPase superfamily. Rho family.

The protein resides in the cell membrane. The protein localises to the cytoplasm. It is found in the cytoskeleton. Plasma membrane-associated small GTPase which cycles between an active GTP-bound and an inactive GDP-bound state. Causes the formation of thin, actin-rich surface projections called filopodia. Functions cooperatively with CDC42 and Rac to generate additional structures, increasing the diversity of actin-based morphology. This is Rho-related GTP-binding protein RhoF (Rhof) from Mus musculus (Mouse).